We begin with the raw amino-acid sequence, 113 residues long: UPF0482 protein CKO_01577 (113 aa).

Positions methionine 1–alanine 28 are cleaved as a signal peptide. Positions arginine 44–arginine 67 are disordered. Over residues alanine 47–serine 59 the composition is skewed to basic and acidic residues.

This sequence belongs to the UPF0482 family.

This Citrobacter koseri (strain ATCC BAA-895 / CDC 4225-83 / SGSC4696) protein is UPF0482 protein CKO_01577.